Here is a 128-residue protein sequence, read N- to C-terminus: Iron-sulfur cluster insertion protein ErpA (128 aa).

Iron-sulfur cluster is bound by residues cysteine 56, cysteine 120, and cysteine 122.

The protein belongs to the HesB/IscA family. As to quaternary structure, homodimer. Requires iron-sulfur cluster as cofactor.

Required for insertion of 4Fe-4S clusters for at least IspG. The protein is Iron-sulfur cluster insertion protein ErpA of Xanthomonas euvesicatoria pv. vesicatoria (strain 85-10) (Xanthomonas campestris pv. vesicatoria).